Reading from the N-terminus, the 62-residue chain is Chymotrypsin inhibitor SCI-I (62 aa).

The BPTI/Kunitz inhibitor domain maps to 9 to 60; it reads CEQAFGNSGPCFAYIKLYSYNQKTKKCEEFIYGGCQGNDNRFITLAECEQKC. 3 disulfide bridges follow: cysteine 9-cysteine 60, cysteine 19-cysteine 43, and cysteine 35-cysteine 56.

In terms of biological role, inhibits chymotrypsin and thus avoids the accidental chymotrypsin-mediated activation of prophenoloxidase. This enzyme is required by the insect immune system to produce melanin which is used to engulf foreign objects. This Bombyx mori (Silk moth) protein is Chymotrypsin inhibitor SCI-I.